A 474-amino-acid polypeptide reads, in one-letter code: uncharacterized protein (474 aa).

A helical membrane pass occupies residues 3 to 23 (LTLWLVLGAVGVGAVGTGVGF). Residues 171 to 296 (VSDGSSSKTR…KETKDRTKVD (126 aa)) form a disordered region. The segment covering 180-210 (RTPKKTKTSKKKPIKKKSSKSKSSKGSKKQK) has biased composition (basic residues). Residues 231 to 253 (TRSQSKQQKGQEQATDQTDSEGV) show a composition bias toward polar residues. Positions 257-266 (EGADNTDTEL) are enriched in acidic residues. Low complexity predominate over residues 267–281 (VETTAETTEQEATTK). Over residues 282 to 296 (STKDTKETKDRTKVD) the composition is skewed to basic and acidic residues.

It is found in the membrane. This is an uncharacterized protein from Mycoplasma pneumoniae (strain ATCC 29342 / M129 / Subtype 1) (Mycoplasmoides pneumoniae).